Here is a 460-residue protein sequence, read N- to C-terminus: Muscarinic acetylcholine receptor M1 (460 aa).

Residues 1–22 (MNTSAPPAVSPNITVLAPGKGP) lie on the Extracellular side of the membrane. N2 and N12 each carry an N-linked (GlcNAc...) asparagine glycan. The chain crosses the membrane as a helical span at residues 23–48 (WQVAFIGITTGLLSLATVTGNLLVLI). At 49 to 62 (SFKVNTELKTVNNY) the chain is on the cytoplasmic side. Residues 63-84 (FLLSLACADLIIGTFSMNLYTT) traverse the membrane as a helical segment. At 85-95 (YLLMGHWALGT) the chain is on the extracellular side. A helical transmembrane segment spans residues 96 to 121 (LACDLWLALDYVASNASVMNLLLISF). C98 and C178 are joined by a disulfide. Residues 122-142 (DRYFSVTRPLSYRAKRTPRRA) are Cytoplasmic-facing. The chain crosses the membrane as a helical span at residues 143–164 (ALMIGLAWLVSFVLWAPAILFW). The Extracellular segment spans residues 165–185 (QYLVGERTVLAGQCYIQFLSQ). The chain crosses the membrane as a helical span at residues 186 to 209 (PIITFGTAMAAFYLPVTVMCTLYW). The Cytoplasmic segment spans residues 210–366 (RIYRETENRA…LVKEKKAART (157 aa)). Disordered regions lie at residues 225–259 (LQGS…PGRC), 273–297 (SWKE…EEPG), and 310–351 (EAQA…QLAK). A Phosphothreonine modification is found at T230. The segment covering 238-247 (SSSSERSQPG) has biased composition (low complexity). Residues 328–343 (RPTKKGRDRAGKGQKP) show a composition bias toward basic residues. The chain crosses the membrane as a helical span at residues 367–390 (LSAILLAFILTWTPYNIMVLVSTF). Residues 391–401 (CKDCVPETLWE) lie on the Extracellular side of the membrane. The helical transmembrane segment at 402–420 (LGYWLCYVNSTINPMCYAL) threads the bilayer. Residues 421–460 (CNKAFRDTFRLLLLCRWDKRRWRKIPKRPGSVHRTPSRQC) are Cytoplasmic-facing. T428 is modified (phosphothreonine). S451 bears the Phosphoserine mark. Residue T455 is modified to Phosphothreonine. Phosphoserine is present on S457.

This sequence belongs to the G-protein coupled receptor 1 family. Muscarinic acetylcholine receptor subfamily. CHRM1 sub-subfamily. In terms of assembly, interacts with GPRASP2. Interacts with TMEM147.

Its subcellular location is the cell membrane. It localises to the postsynaptic cell membrane. The muscarinic acetylcholine receptor mediates various cellular responses, including inhibition of adenylate cyclase, breakdown of phosphoinositides and modulation of potassium channels through the action of G proteins. Primary transducing effect is Pi turnover. The polypeptide is Muscarinic acetylcholine receptor M1 (CHRM1) (Macaca mulatta (Rhesus macaque)).